The sequence spans 777 residues: Santalene and bergamotene synthase, chloroplastic (777 aa).

The N-terminal 36 residues, 1-36 (MIVGYRSTIITLSHPKLGNGKTISSNAIFQRSCRVR), are a transit peptide targeting the chloroplast. Mg(2+) contacts are provided by Asp530 and Asp534. Residues 530–534 (DDQFD) carry the DDXXD motif motif.

The protein belongs to the terpene synthase family. Tpse subfamily. Mg(2+) serves as cofactor. It depends on Mn(2+) as a cofactor.

The protein resides in the plastid. It is found in the chloroplast. It carries out the reaction (2Z,6Z)-farnesyl diphosphate = (+)-alpha-santalene + diphosphate. The catalysed reaction is (2Z,6Z)-farnesyl diphosphate = (+)-endo-beta-bergamotene + diphosphate. It catalyses the reaction (2Z,6Z)-farnesyl diphosphate = (1S,5S,6S)-alpha-bergamotene + diphosphate. Its function is as follows. (2Z,6Z)-farnesyl diphosphate cyclizing enzyme. Produces (+)-alpha-santalene, (+)-endo-beta-bergamotene, (-)-endo-alpha-bergamotene, and at lower amounts, (-)exo-alpha-bergamotene and (+)-epi-beta-santalene. Not able to use geranyl diphosphate, E,E-farnesyl diphosphate or E,E,E-geranylgeranyl diphosphate as substrates, but able to use Neryl diphosphate to make the monoterpene terpineol. This is Santalene and bergamotene synthase, chloroplastic (SBS) from Solanum habrochaites (Wild tomato).